We begin with the raw amino-acid sequence, 252 residues long: tRNA (guanine-N(1)-)-methyltransferase (252 aa).

Residues G113 and 133 to 138 (LGDYVL) contribute to the S-adenosyl-L-methionine site.

Belongs to the RNA methyltransferase TrmD family. In terms of assembly, homodimer.

The protein localises to the cytoplasm. The enzyme catalyses guanosine(37) in tRNA + S-adenosyl-L-methionine = N(1)-methylguanosine(37) in tRNA + S-adenosyl-L-homocysteine + H(+). In terms of biological role, specifically methylates guanosine-37 in various tRNAs. This is tRNA (guanine-N(1)-)-methyltransferase from Stenotrophomonas maltophilia (strain R551-3).